The sequence spans 263 residues: Ribonuclease HII (263 aa).

The RNase H type-2 domain maps to 71-262 (QAIAGIDEVG…VKSMCCDSTN (192 aa)). Aspartate 77, glutamate 78, and aspartate 172 together coordinate a divalent metal cation.

The protein belongs to the RNase HII family. The cofactor is Mn(2+). Mg(2+) is required as a cofactor.

It localises to the cytoplasm. It carries out the reaction Endonucleolytic cleavage to 5'-phosphomonoester.. Endonuclease that specifically degrades the RNA of RNA-DNA hybrids. The sequence is that of Ribonuclease HII from Streptococcus pyogenes serotype M12 (strain MGAS2096).